A 219-amino-acid chain; its full sequence is Octanoyltransferase (219 aa).

Residues 37–219 (EHSPDQLWIL…DFNDVQVILQ (183 aa)) form the BPL/LPL catalytic domain. Residues 76–83 (RGGQVTWH), 143–145 (SLG), and 156–158 (GLA) each bind substrate. The active-site Acyl-thioester intermediate is the C174.

It belongs to the LipB family.

It localises to the cytoplasm. It catalyses the reaction octanoyl-[ACP] + L-lysyl-[protein] = N(6)-octanoyl-L-lysyl-[protein] + holo-[ACP] + H(+). Its pathway is protein modification; protein lipoylation via endogenous pathway; protein N(6)-(lipoyl)lysine from octanoyl-[acyl-carrier-protein]: step 1/2. Functionally, catalyzes the transfer of endogenously produced octanoic acid from octanoyl-acyl-carrier-protein onto the lipoyl domains of lipoate-dependent enzymes. Lipoyl-ACP can also act as a substrate although octanoyl-ACP is likely to be the physiological substrate. In Acinetobacter baylyi (strain ATCC 33305 / BD413 / ADP1), this protein is Octanoyltransferase.